We begin with the raw amino-acid sequence, 510 residues long: Transcriptional regulatory protein GAT1 (510 aa).

Ser-167 is subject to Phosphoserine. The span at 220–256 (NHSHNSSHNNNSPSIANNTNANTNTNTSASTNTNSPL) shows a compositional bias: low complexity. Disordered regions lie at residues 220 to 311 (NHSH…IKCS) and 358 to 383 (QRSSTKINNNITPPPSSSLNPGAAGK). Ser-262 and Ser-270 each carry phosphoserine. The span at 274–287 (SSVRKKKPALKKIK) shows a compositional bias: basic residues. The span at 294-306 (SSATPPSNTSSNP) shows a compositional bias: low complexity. The GATA-type zinc-finger motif lies at 310–334 (CSNCTTSTTPLWRKDPKGLPLCNAC). Thr-369 is modified (phosphothreonine). Ser-399 and Ser-418 each carry phosphoserine.

It localises to the nucleus. Its function is as follows. Positive regulator of multiple nitrogen catabolic genes. This is Transcriptional regulatory protein GAT1 (GAT1) from Saccharomyces cerevisiae (strain ATCC 204508 / S288c) (Baker's yeast).